The primary structure comprises 186 residues: UPF0397 protein SGO_0469 (186 aa).

5 helical membrane passes run 14–34, 50–70, 77–97, 119–139, and 152–172; these read VVATGIGAALFVVIGMVSIPT, LFGVVFGPIVGFLTGFIGHAL, GNPWWTWVLASGLFGLVVGLL, AQFVANALVWVVIAPLGDILI, and VVATVANGLTVAVAGTLLLIA.

The protein belongs to the UPF0397 family.

Its subcellular location is the cell membrane. The polypeptide is UPF0397 protein SGO_0469 (Streptococcus gordonii (strain Challis / ATCC 35105 / BCRC 15272 / CH1 / DL1 / V288)).